The primary structure comprises 452 residues: Probable glycine dehydrogenase (decarboxylating) subunit 1 (452 aa).

The protein belongs to the GcvP family. N-terminal subunit subfamily. In terms of assembly, the glycine cleavage system is composed of four proteins: P, T, L and H. In this organism, the P 'protein' is a heterodimer of two subunits.

The catalysed reaction is N(6)-[(R)-lipoyl]-L-lysyl-[glycine-cleavage complex H protein] + glycine + H(+) = N(6)-[(R)-S(8)-aminomethyldihydrolipoyl]-L-lysyl-[glycine-cleavage complex H protein] + CO2. Functionally, the glycine cleavage system catalyzes the degradation of glycine. The P protein binds the alpha-amino group of glycine through its pyridoxal phosphate cofactor; CO(2) is released and the remaining methylamine moiety is then transferred to the lipoamide cofactor of the H protein. This chain is Probable glycine dehydrogenase (decarboxylating) subunit 1, found in Novosphingobium aromaticivorans (strain ATCC 700278 / DSM 12444 / CCUG 56034 / CIP 105152 / NBRC 16084 / F199).